Here is a 266-residue protein sequence, read N- to C-terminus: Type III pantothenate kinase (266 aa).

Residue 15-22 participates in ATP binding; sequence EIGNSSTS. Substrate contacts are provided by residues tyrosine 105 and 112–115; that span reads GADR. Aspartate 114 (proton acceptor) is an active-site residue. Aspartate 135 provides a ligand contact to K(+). Threonine 138 is an ATP binding site. Threonine 191 contacts substrate.

Belongs to the type III pantothenate kinase family. In terms of assembly, homodimer. It depends on NH4(+) as a cofactor. K(+) is required as a cofactor.

Its subcellular location is the cytoplasm. It catalyses the reaction (R)-pantothenate + ATP = (R)-4'-phosphopantothenate + ADP + H(+). It participates in cofactor biosynthesis; coenzyme A biosynthesis; CoA from (R)-pantothenate: step 1/5. Catalyzes the phosphorylation of pantothenate (Pan), the first step in CoA biosynthesis. The protein is Type III pantothenate kinase of Chlorobium chlorochromatii (strain CaD3).